The chain runs to 732 residues: Polyribonucleotide nucleotidyltransferase (732 aa).

Residues aspartate 489 and aspartate 495 each contribute to the Mg(2+) site. Residues 556-615 (PKIDTIQIDVDKIKIVIGKGGETIDKIIAETGVKIDIDEEGLVQIFSSDQAAIDRTKEII) form the KH domain. Residues 625–693 (GEVYHAKVVR…DKGRVDASMK (69 aa)) enclose the S1 motif domain. Residues 691-732 (SMKALIPRPPKPEKKEEKASEAKEASNDQASKSQSETASEEK) form a disordered region. The segment covering 700–716 (PKPEKKEEKASEAKEAS) has biased composition (basic and acidic residues). The span at 717 to 732 (NDQASKSQSETASEEK) shows a compositional bias: polar residues.

The protein belongs to the polyribonucleotide nucleotidyltransferase family. Mg(2+) is required as a cofactor.

The protein resides in the cytoplasm. It catalyses the reaction RNA(n+1) + phosphate = RNA(n) + a ribonucleoside 5'-diphosphate. Its function is as follows. Involved in mRNA degradation. Catalyzes the phosphorolysis of single-stranded polyribonucleotides processively in the 3'- to 5'-direction. This is Polyribonucleotide nucleotidyltransferase from Streptococcus uberis (strain ATCC BAA-854 / 0140J).